We begin with the raw amino-acid sequence, 456 residues long: ATP-dependent protease ATPase subunit HslU (456 aa).

ATP is bound by residues I18, G60 to E65, D270, E334, and R406.

Belongs to the ClpX chaperone family. HslU subfamily. A double ring-shaped homohexamer of HslV is capped on each side by a ring-shaped HslU homohexamer. The assembly of the HslU/HslV complex is dependent on binding of ATP.

Its subcellular location is the cytoplasm. In terms of biological role, ATPase subunit of a proteasome-like degradation complex; this subunit has chaperone activity. The binding of ATP and its subsequent hydrolysis by HslU are essential for unfolding of protein substrates subsequently hydrolyzed by HslV. HslU recognizes the N-terminal part of its protein substrates and unfolds these before they are guided to HslV for hydrolysis. The chain is ATP-dependent protease ATPase subunit HslU from Exiguobacterium sibiricum (strain DSM 17290 / CCUG 55495 / CIP 109462 / JCM 13490 / 255-15).